Here is a 335-residue protein sequence, read N- to C-terminus: Adenine deaminase (335 aa).

Zn(2+) contacts are provided by histidine 14, histidine 16, and histidine 194. The Proton donor role is filled by glutamate 197. Aspartate 275 is a Zn(2+) binding site. Aspartate 276 is a substrate binding site.

Belongs to the metallo-dependent hydrolases superfamily. Adenosine and AMP deaminases family. Adenine deaminase type 2 subfamily. It depends on Zn(2+) as a cofactor.

It carries out the reaction adenine + H2O + H(+) = hypoxanthine + NH4(+). Catalyzes the hydrolytic deamination of adenine to hypoxanthine. Plays an important role in the purine salvage pathway and in nitrogen catabolism. This Chlorobium phaeobacteroides (strain BS1) protein is Adenine deaminase.